The primary structure comprises 144 residues: Ribosomal RNA large subunit methyltransferase H (144 aa).

S-adenosyl-L-methionine-binding positions include Leu-68, Gly-96, and 112 to 117; that span reads FSKLTF.

Belongs to the RNA methyltransferase RlmH family. In terms of assembly, homodimer.

It localises to the cytoplasm. It catalyses the reaction pseudouridine(1915) in 23S rRNA + S-adenosyl-L-methionine = N(3)-methylpseudouridine(1915) in 23S rRNA + S-adenosyl-L-homocysteine + H(+). In terms of biological role, specifically methylates the pseudouridine at position 1915 (m3Psi1915) in 23S rRNA. The chain is Ribosomal RNA large subunit methyltransferase H from Mycoplasmopsis synoviae (strain 53) (Mycoplasma synoviae).